A 393-amino-acid polypeptide reads, in one-letter code: Chorismate synthase (393 aa).

Arg40 and Arg46 together coordinate NADP(+). FMN-binding positions include 129–131, 249–250, Gly301, 316–320, and Arg342; these read RSS, QA, and KPIPT.

The protein belongs to the chorismate synthase family. As to quaternary structure, homotetramer. FMNH2 is required as a cofactor.

It carries out the reaction 5-O-(1-carboxyvinyl)-3-phosphoshikimate = chorismate + phosphate. It participates in metabolic intermediate biosynthesis; chorismate biosynthesis; chorismate from D-erythrose 4-phosphate and phosphoenolpyruvate: step 7/7. Catalyzes the anti-1,4-elimination of the C-3 phosphate and the C-6 proR hydrogen from 5-enolpyruvylshikimate-3-phosphate (EPSP) to yield chorismate, which is the branch point compound that serves as the starting substrate for the three terminal pathways of aromatic amino acid biosynthesis. This reaction introduces a second double bond into the aromatic ring system. The polypeptide is Chorismate synthase (Geobacter metallireducens (strain ATCC 53774 / DSM 7210 / GS-15)).